Consider the following 119-residue polypeptide: Large ribosomal subunit protein bL20 (119 aa).

This sequence belongs to the bacterial ribosomal protein bL20 family.

Binds directly to 23S ribosomal RNA and is necessary for the in vitro assembly process of the 50S ribosomal subunit. It is not involved in the protein synthesizing functions of that subunit. The polypeptide is Large ribosomal subunit protein bL20 (Bradyrhizobium sp. (strain BTAi1 / ATCC BAA-1182)).